The primary structure comprises 584 residues: Phosphoinositide phospholipase C 7 (584 aa).

In terms of domain architecture, EF-hand-like spans 26–102; the sequence is EIKTLFDNYS…NSPLSSLEVH (77 aa). The region spanning 103 to 248 is the PI-PLC X-box domain; it reads QDMDAPLSHY…LKKRIMISTK (146 aa). Residues His-118 and His-164 contribute to the active site. Residues 285–318 form a disordered region; sequence DRSVDKNDSNGDDDDDDDDDDDDDDGDDKIKKNA. Ser-287 carries the post-translational modification Phosphoserine. Positions 294–311 are enriched in acidic residues; sequence NGDDDDDDDDDDDDDDGD. One can recognise a PI-PLC Y-box domain in the interval 323-439; that stretch reads KHLIAIEAGK…GYIKKPDLLL (117 aa). A C2 domain is found at 433 to 566; the sequence is KKPDLLLKSN…QGIRAVPLRN (134 aa).

The cofactor is Ca(2+). In terms of tissue distribution, expressed in leaves, roots, flowers and siliques.

The protein resides in the cell membrane. It catalyses the reaction a 1,2-diacyl-sn-glycero-3-phospho-(1D-myo-inositol-4,5-bisphosphate) + H2O = 1D-myo-inositol 1,4,5-trisphosphate + a 1,2-diacyl-sn-glycerol + H(+). Its function is as follows. The production of the second messenger molecules diacylglycerol (DAG) and inositol 1,4,5-trisphosphate (IP3) is mediated by activated phosphatidylinositol-specific phospholipase C enzymes. The polypeptide is Phosphoinositide phospholipase C 7 (PLC7) (Arabidopsis thaliana (Mouse-ear cress)).